Here is a 444-residue protein sequence, read N- to C-terminus: RING finger and transmembrane domain-containing protein 2 (444 aa).

Topologically, residues 1 to 181 are extracellular; it reads MWLFTVNQVL…ILLAKLCFQH (181 aa). Disordered stretches follow at residues 13–41 and 92–149; these read MQRRHSSNTDNIPPERNRSQALSSEASVD and PASR…PGTP. The segment covering 107–121 has biased composition (basic residues); it reads YHHRQPHHHFHHGGH. A compositionally biased stretch (basic and acidic residues) spans 131-140; the sequence is GGDHRGHSEE. Residues 182–202 form a helical membrane-spanning segment; that stretch reads KLGIAVCIGMASTFAYANSTL. At 203 to 214 the chain is on the cytoplasmic side; that stretch reads REQVSLKEKRSV. A helical membrane pass occupies residues 215-235; the sequence is LVILWILAFLAGNTLYVLYTF. At 236–255 the chain is on the extracellular side; the sequence is SSQQLYNSLIFLKPNLETLD. A helical transmembrane segment spans residues 256 to 276; sequence FFDLLWIVGIADFVLKYITIA. Residues 277–329 are Cytoplasmic-facing; that stretch reads LKCLIVALPKIILAVKSKGKFYLVIEELSQLFRSLVPIQLWYKYIMGDDSSNS. The chain crosses the membrane as a helical span at residues 330–350; the sequence is YFLGGVLIVLYSLCKSFDICG. Residues 351–444 lie on the Extracellular side of the membrane; the sequence is RVGGVRKALK…GATSAHFQVY (94 aa). An RING-type; degenerate zinc finger spans residues 384 to 422; that stretch reads CAICQAEFREPLILLCQHVFCEECLCLWLDRERTCPLSR.

It is found in the membrane. E3 ubiquitin-protein ligase that negatively regulates IL3-dependent cellular responses through IL3RA ubiquitination and degradation by the proteasome, having an anti-inflammatory effect. The protein is RING finger and transmembrane domain-containing protein 2 (RNFT2) of Pongo abelii (Sumatran orangutan).